Here is a 64-residue protein sequence, read N- to C-terminus: Beta-insect excitatory toxin OdTx12 (64 aa).

The 59-residue stretch at 1–59 (QSTGGKAPECLLSNYCNNECTKVHYADKGYCCLLSCYCFGLSDDKKVLEISDSRKKYCD) folds into the LCN-type CS-alpha/beta domain. 4 disulfides stabilise this stretch: Cys-10–Cys-31, Cys-16–Cys-36, Cys-20–Cys-38, and Cys-32–Cys-58.

This sequence belongs to the long (4 C-C) scorpion toxin superfamily. Sodium channel inhibitor family. Beta subfamily. Expressed by the venom gland.

Its subcellular location is the secreted. Its function is as follows. Excitatory insect beta-toxins induce a spastic paralysis. They bind voltage-independently at site-4 of sodium channels (Nav) and shift the voltage of activation toward more negative potentials thereby affecting sodium channel activation and promoting spontaneous and repetitive firing. In vivo, this recombinant protein is lethal to Locusta migratoria larvae after injection, but has no significant effect when orally administered. Is not toxic to mice after intracerebroventricular injection. This is Beta-insect excitatory toxin OdTx12 from Odontobuthus doriae (Yellow Iranian scorpion).